The primary structure comprises 426 residues: Serine--tRNA ligase (426 aa).

Residue 230-232 (TAE) participates in L-serine binding. 261–263 (RSE) serves as a coordination point for ATP. Residue glutamate 284 participates in L-serine binding. 348 to 351 (EISS) contributes to the ATP binding site. L-serine is bound at residue serine 384.

Belongs to the class-II aminoacyl-tRNA synthetase family. Type-1 seryl-tRNA synthetase subfamily. In terms of assembly, homodimer. The tRNA molecule binds across the dimer.

It is found in the cytoplasm. The enzyme catalyses tRNA(Ser) + L-serine + ATP = L-seryl-tRNA(Ser) + AMP + diphosphate + H(+). It catalyses the reaction tRNA(Sec) + L-serine + ATP = L-seryl-tRNA(Sec) + AMP + diphosphate + H(+). The protein operates within aminoacyl-tRNA biosynthesis; selenocysteinyl-tRNA(Sec) biosynthesis; L-seryl-tRNA(Sec) from L-serine and tRNA(Sec): step 1/1. Functionally, catalyzes the attachment of serine to tRNA(Ser). Is also able to aminoacylate tRNA(Sec) with serine, to form the misacylated tRNA L-seryl-tRNA(Sec), which will be further converted into selenocysteinyl-tRNA(Sec). The polypeptide is Serine--tRNA ligase (Novosphingobium aromaticivorans (strain ATCC 700278 / DSM 12444 / CCUG 56034 / CIP 105152 / NBRC 16084 / F199)).